We begin with the raw amino-acid sequence, 98 residues long: NADH-ubiquinone oxidoreductase chain 4L (98 aa).

3 consecutive transmembrane segments (helical) span residues 2–22, 26–46, and 59–79; these read SPAV…TLMF, LMST…LATI, and IPIA…ALLA.

This sequence belongs to the complex I subunit 4L family. As to quaternary structure, core subunit of respiratory chain NADH dehydrogenase (Complex I) which is composed of 45 different subunits.

The protein localises to the mitochondrion inner membrane. The enzyme catalyses a ubiquinone + NADH + 5 H(+)(in) = a ubiquinol + NAD(+) + 4 H(+)(out). Functionally, core subunit of the mitochondrial membrane respiratory chain NADH dehydrogenase (Complex I) which catalyzes electron transfer from NADH through the respiratory chain, using ubiquinone as an electron acceptor. Part of the enzyme membrane arm which is embedded in the lipid bilayer and involved in proton translocation. This Alexandromys kikuchii (Taiwan vole) protein is NADH-ubiquinone oxidoreductase chain 4L (MT-ND4L).